Here is a 224-residue protein sequence, read N- to C-terminus: Probable GTP-binding protein EngB (224 aa).

In terms of domain architecture, EngB-type G spans isoleucine 31–proline 205. Residues glycine 39–serine 46, glycine 66–leucine 70, aspartate 84–glycine 87, threonine 151–aspartate 154, and leucine 184–serine 186 each bind GTP. Residues serine 46 and threonine 68 each contribute to the Mg(2+) site.

This sequence belongs to the TRAFAC class TrmE-Era-EngA-EngB-Septin-like GTPase superfamily. EngB GTPase family. Mg(2+) serves as cofactor.

Necessary for normal cell division and for the maintenance of normal septation. This Shewanella frigidimarina (strain NCIMB 400) protein is Probable GTP-binding protein EngB.